The chain runs to 2042 residues: Cell adhesion molecule DSCAML1 (2042 aa).

A signal peptide spans 1 to 17 (MWLVTFFLLYSLRKAHT). Residues 18 to 1592 (EDVGTSLYFV…AQGEGDDVKK (1575 aa)) lie on the Extracellular side of the membrane. Residues Asn-28 and Asn-78 are each glycosylated (N-linked (GlcNAc...) asparagine). Ig-like C2-type domains lie at 37 to 107 (SSTV…AENS), 114 to 216 (PNIR…ARLS), 227 to 311 (PTML…GTLT), 315 to 403 (PLRV…SIIT), 409 to 502 (PRIV…ARIN), 507 to 587 (PSIR…LSIS), 597 to 686 (PPLI…RQLI), 691 to 785 (PRFV…MFLT), and 789 to 886 (PAMI…LTVQ). Intrachain disulfides connect Cys-46-Cys-102, Cys-145-Cys-197, Cys-248-Cys-295, Cys-337-Cys-387, and Cys-430-Cys-486. 9 N-linked (GlcNAc...) asparagine glycosylation sites follow: Asn-369, Asn-472, Asn-514, Asn-557, Asn-667, Asn-711, Asn-750, Asn-797, and Asn-810. Intrachain disulfides connect Cys-527–Cys-576 and Cys-618–Cys-670. Cys-712 and Cys-768 form a disulfide bridge. The cysteines at positions 811 and 868 are disulfide-linked. Fibronectin type-III domains follow at residues 888–985 (PPDP…TEEA), 990–1089 (PPMD…TLED), 1094–1190 (PPEN…TKED), and 1194–1289 (PPAG…AGKA). N-linked (GlcNAc...) asparagine glycans are attached at residues Asn-927, Asn-1083, Asn-1145, Asn-1163, Asn-1276, and Asn-1346. The Ig-like C2-type 10 domain occupies 1279-1368 (EKVTIEPAGK…SGYYTCTATN (90 aa)). The cysteines at positions 1312 and 1364 are disulfide-linked. Fibronectin type-III domains are found at residues 1384–1478 (PPDQ…THGR) and 1479–1579 (EPSF…TIPP). N-linked (GlcNAc...) asparagine glycans are attached at residues Asn-1493, Asn-1532, and Asn-1562. A helical membrane pass occupies residues 1593 to 1613 (LFTIACPIILATLGVALLFII). Residues 1614 to 2042 (RKKRKEKRLK…GAYSKSYTLV (429 aa)) lie on the Cytoplasmic side of the membrane. Disordered stretches follow at residues 1716–1742 (PLID…HSTR), 1781–1805 (SDSY…TESA), 1841–1865 (SSDQ…PSEP), and 1940–2042 (PPAR…YTLV). The span at 1733–1742 (KSVKSAHSTR) shows a compositional bias: basic residues. Polar residues-rich tracts occupy residues 1781–1790 (SDSYSASLSQ) and 1841–1863 (SSDQ…STPS). Positions 1951–1960 (AKPPGLPPPS) are enriched in pro residues. Low complexity predominate over residues 1961–1983 (SSSSSTTLPQRTLPMPTAASTAP). Positions 1984 to 1995 (APAPAPAAPAEP) are enriched in pro residues. Low complexity-rich tracts occupy residues 1996–2005 (PANTTTTTTT) and 2023–2034 (GAGRAQKQGAGA).

Homodimer; mediates homophilic interactions to promote cell adhesion. SDK1, SDK2, DSCAM and DSCAML1 are expressed in non-overlapping subsets of interneurons and retinal ganglion cells (RGCs) that form synapses in distinct inner plexiform layer (IPL) sublaminae.

It localises to the cell membrane. The protein localises to the synapse. Functionally, cell adhesion molecule that plays a role in neuronal self-avoidance. Promotes repulsion between specific neuronal processes of either the same cell or the same subtype of cells. Adhesion molecule that promotes lamina-specific synaptic connections in the retina: expressed in specific subsets of interneurons and retinal ganglion cells (RGCs) and promotes synaptic connectivity via homophilic interactions. This Gallus gallus (Chicken) protein is Cell adhesion molecule DSCAML1 (DSCAML1).